Here is a 210-residue protein sequence, read N- to C-terminus: Pyridoxine/pyridoxamine 5'-phosphate oxidase (210 aa).

Substrate is bound by residues 7 to 10 (RDEY) and lysine 65. FMN contacts are provided by residues 60–65 (RMVLLK), 75–76 (FT), arginine 81, lysine 82, and glutamine 104. Substrate is bound by residues tyrosine 122, arginine 126, and serine 130. FMN contacts are provided by residues 139–140 (QS) and tryptophan 183. 189-191 (RLH) is a substrate binding site. An FMN-binding site is contributed by arginine 193.

It belongs to the pyridoxamine 5'-phosphate oxidase family. In terms of assembly, homodimer. The cofactor is FMN.

The catalysed reaction is pyridoxamine 5'-phosphate + O2 + H2O = pyridoxal 5'-phosphate + H2O2 + NH4(+). It carries out the reaction pyridoxine 5'-phosphate + O2 = pyridoxal 5'-phosphate + H2O2. It participates in cofactor metabolism; pyridoxal 5'-phosphate salvage; pyridoxal 5'-phosphate from pyridoxamine 5'-phosphate: step 1/1. The protein operates within cofactor metabolism; pyridoxal 5'-phosphate salvage; pyridoxal 5'-phosphate from pyridoxine 5'-phosphate: step 1/1. In terms of biological role, catalyzes the oxidation of either pyridoxine 5'-phosphate (PNP) or pyridoxamine 5'-phosphate (PMP) into pyridoxal 5'-phosphate (PLP). The protein is Pyridoxine/pyridoxamine 5'-phosphate oxidase of Haemophilus influenzae (strain 86-028NP).